We begin with the raw amino-acid sequence, 443 residues long: Methyl-coenzyme M reductase subunit beta (443 aa).

Tyrosine 367 lines the coenzyme M pocket. Glycine 369 is a binding site for coenzyme B.

The protein belongs to the methyl-coenzyme M reductase beta subunit family. MCR is a hexamer of two alpha, two beta, and two gamma chains, forming a dimer of heterotrimers. Coenzyme F430 serves as cofactor.

The protein localises to the cytoplasm. It catalyses the reaction coenzyme B + methyl-coenzyme M = methane + coenzyme M-coenzyme B heterodisulfide. It functions in the pathway one-carbon metabolism; methyl-coenzyme M reduction; methane from methyl-coenzyme M: step 1/1. Its function is as follows. Component of the methyl-coenzyme M reductase (MCR) I that catalyzes the reductive cleavage of methyl-coenzyme M (CoM-S-CH3 or 2-(methylthio)ethanesulfonate) using coenzyme B (CoB or 7-mercaptoheptanoylthreonine phosphate) as reductant which results in the production of methane and the mixed heterodisulfide of CoB and CoM (CoM-S-S-CoB). This is the final step in methanogenesis. The sequence is that of Methyl-coenzyme M reductase subunit beta (mcrB) from Methanococcus voltae.